Reading from the N-terminus, the 110-residue chain is MSDNQRIRIRLKAFDHRLIDRSTREIVETARRTGAIIRGPILLPTKIERYTVLISPNIDKDARDQYEIRTHKRLVDISEPTDKTVDALMKLDLAAGVDVQIELLNKKSGA.

This sequence belongs to the universal ribosomal protein uS10 family. In terms of assembly, part of the 30S ribosomal subunit.

Its function is as follows. Involved in the binding of tRNA to the ribosomes. The chain is Small ribosomal subunit protein uS10 from Coxiella burnetii (strain Dugway 5J108-111).